Reading from the N-terminus, the 440-residue chain is Ribulose bisphosphate carboxylase large chain (440 aa).

At Lys3 the chain carries N6,N6,N6-trimethyllysine. Substrate contacts are provided by Asn112 and Thr162. Residue Lys164 is the Proton acceptor of the active site. Lys166 serves as a coordination point for substrate. Residues Lys190, Asp192, and Glu193 each contribute to the Mg(2+) site. Lys190 is subject to N6-carboxylysine. The Proton acceptor role is filled by His283. Substrate contacts are provided by Arg284, His316, and Ser368.

This sequence belongs to the RuBisCO large chain family. Type I subfamily. Heterohexadecamer of 8 large chains and 8 small chains; disulfide-linked. The disulfide link is formed within the large subunit homodimers. Requires Mg(2+) as cofactor. Post-translationally, the disulfide bond which can form in the large chain dimeric partners within the hexadecamer appears to be associated with oxidative stress and protein turnover.

It is found in the plastid. The protein resides in the chloroplast. It catalyses the reaction 2 (2R)-3-phosphoglycerate + 2 H(+) = D-ribulose 1,5-bisphosphate + CO2 + H2O. The enzyme catalyses D-ribulose 1,5-bisphosphate + O2 = 2-phosphoglycolate + (2R)-3-phosphoglycerate + 2 H(+). In terms of biological role, ruBisCO catalyzes two reactions: the carboxylation of D-ribulose 1,5-bisphosphate, the primary event in carbon dioxide fixation, as well as the oxidative fragmentation of the pentose substrate in the photorespiration process. Both reactions occur simultaneously and in competition at the same active site. The sequence is that of Ribulose bisphosphate carboxylase large chain from Bambusa multiplex (Hedge bamboo).